The following is a 343-amino-acid chain: Heat-inducible transcription repressor HrcA (343 aa).

It belongs to the HrcA family.

Negative regulator of class I heat shock genes (grpE-dnaK-dnaJ and groELS operons). Prevents heat-shock induction of these operons. The polypeptide is Heat-inducible transcription repressor HrcA (Alkaliphilus metalliredigens (strain QYMF)).